A 371-amino-acid chain; its full sequence is uncharacterized protein (371 aa).

The EH domain occupies 43-148; the sequence is DESRVPKFYL…VQAFPTASNP (106 aa). The segment at 179 to 205 is disordered; that stretch reads SMRKKKESDSKEVSAHNSPAKGAAHDL.

This is an uncharacterized protein from Caenorhabditis elegans.